Reading from the N-terminus, the 1168-residue chain is ATP-dependent DNA helicase mph1 (1168 aa).

Polar residues-rich tracts occupy residues 24 to 38 (NITS…QLAS) and 59 to 68 (PTVSQGQATA). A disordered region spans residues 24-132 (NITSHHPSNS…PFRADMPPEQ (109 aa)). Low complexity predominate over residues 71–88 (RAKTASKPTTSATTSRPS). The segment covering 89–104 (LAQSSQRKNLRQTTLW) has biased composition (polar residues). The Helicase ATP-binding domain occupies 162–330 (IVKNGLFNNT…DVIDNLGISH (169 aa)). 175 to 182 (LPTGLGKT) is an ATP binding site. The DEAH box motif lies at 278-281 (DEAH). One can recognise a Helicase C-terminal domain in the interval 506–665 (LVNHFMDAGE…GSRFTFRHDL (160 aa)). 2 disordered regions span residues 690-717 (SQNP…FNMP) and 830-1168 (APAN…DDQE). A compositionally biased stretch (basic residues) spans 701-714 (SAARMRTKPAKKKF). A compositionally biased stretch (polar residues) spans 895–907 (TAKTKSTGVSKQT). Over residues 920–936 (DCEEGGNEYDGNVDDDE) the composition is skewed to acidic residues. The span at 941–959 (RNFRSKGRGRGSGRGKKSQ) shows a compositional bias: basic residues. Residues 985–996 (GSDDGADLEDFI) show a composition bias toward acidic residues. A compositionally biased stretch (polar residues) spans 1001–1030 (EVTSSLQHRPRGSTSPTTAPDAGSSSLSSK).

Belongs to the DEAD box helicase family. DEAH subfamily. FANCM sub-subfamily. Interacts with the MHF histone-fold complex to form the FANCM-MHF complex.

It localises to the nucleus. It catalyses the reaction ATP + H2O = ADP + phosphate + H(+). In terms of biological role, ATP-dependent DNA helicase involved in DNA damage repair by homologous recombination and in genome maintenance. Capable of unwinding D-loops. Plays a role in limiting crossover recombinants during mitotic DNA double-strand break (DSB) repair. Component of a FANCM-MHF complex which promotes gene conversion at blocked replication forks, probably by reversal of the stalled fork. The chain is ATP-dependent DNA helicase mph1 from Neurospora crassa (strain ATCC 24698 / 74-OR23-1A / CBS 708.71 / DSM 1257 / FGSC 987).